A 630-amino-acid chain; its full sequence is Elongation factor 4 (630 aa).

Residues 1 to 22 form a disordered region; the sequence is MTVARNRAGAGPGKGSPISSFA. Residues 30–211 form the tr-type G domain; that stretch reads ARIRNFCIIA…EVVRQVPAPV (182 aa). GTP is bound by residues 42–47 and 158–161; these read DHGKST and NKID.

The protein belongs to the TRAFAC class translation factor GTPase superfamily. Classic translation factor GTPase family. LepA subfamily.

It is found in the cell membrane. The enzyme catalyses GTP + H2O = GDP + phosphate + H(+). Required for accurate and efficient protein synthesis under certain stress conditions. May act as a fidelity factor of the translation reaction, by catalyzing a one-codon backward translocation of tRNAs on improperly translocated ribosomes. Back-translocation proceeds from a post-translocation (POST) complex to a pre-translocation (PRE) complex, thus giving elongation factor G a second chance to translocate the tRNAs correctly. Binds to ribosomes in a GTP-dependent manner. This Rhodococcus jostii (strain RHA1) protein is Elongation factor 4.